The primary structure comprises 269 residues: Formamidopyrimidine-DNA glycosylase (269 aa).

The active-site Schiff-base intermediate with DNA is the P2. E3 serves as the catalytic Proton donor. K57 serves as the catalytic Proton donor; for beta-elimination activity. DNA is bound by residues H90, R109, and K150. The FPG-type zinc-finger motif lies at 235 to 269 (QVYGRKGEPCRVCGTPIVATKHAQRATFYCRQCQK). R259 serves as the catalytic Proton donor; for delta-elimination activity.

The protein belongs to the FPG family. In terms of assembly, monomer. The cofactor is Zn(2+).

It catalyses the reaction Hydrolysis of DNA containing ring-opened 7-methylguanine residues, releasing 2,6-diamino-4-hydroxy-5-(N-methyl)formamidopyrimidine.. The enzyme catalyses 2'-deoxyribonucleotide-(2'-deoxyribose 5'-phosphate)-2'-deoxyribonucleotide-DNA = a 3'-end 2'-deoxyribonucleotide-(2,3-dehydro-2,3-deoxyribose 5'-phosphate)-DNA + a 5'-end 5'-phospho-2'-deoxyribonucleoside-DNA + H(+). Involved in base excision repair of DNA damaged by oxidation or by mutagenic agents. Acts as a DNA glycosylase that recognizes and removes damaged bases. Has a preference for oxidized purines, such as 7,8-dihydro-8-oxoguanine (8-oxoG). Has AP (apurinic/apyrimidinic) lyase activity and introduces nicks in the DNA strand. Cleaves the DNA backbone by beta-delta elimination to generate a single-strand break at the site of the removed base with both 3'- and 5'-phosphates. The protein is Formamidopyrimidine-DNA glycosylase of Escherichia coli O157:H7.